Consider the following 398-residue polypeptide: tRNA-specific 2-thiouridylase MnmA (398 aa).

ATP contacts are provided by residues 20-27 (AMSGGVDS) and L46. C114 functions as the Nucleophile in the catalytic mechanism. C114 and C210 are disulfide-bonded. G138 is a binding site for ATP. Positions 160 to 162 (RDQ) are interaction with tRNA. C210 serves as the catalytic Cysteine persulfide intermediate.

This sequence belongs to the MnmA/TRMU family.

It localises to the cytoplasm. The catalysed reaction is S-sulfanyl-L-cysteinyl-[protein] + uridine(34) in tRNA + AH2 + ATP = 2-thiouridine(34) in tRNA + L-cysteinyl-[protein] + A + AMP + diphosphate + H(+). In terms of biological role, catalyzes the 2-thiolation of uridine at the wobble position (U34) of tRNA, leading to the formation of s(2)U34. The chain is tRNA-specific 2-thiouridylase MnmA from Brucella melitensis biotype 1 (strain ATCC 23456 / CCUG 17765 / NCTC 10094 / 16M).